Consider the following 212-residue polypeptide: Lipid A acyltransferase PagP (212 aa).

Residues 1–26 form the signal peptide; the sequence is MSSTYFHSSLLAATLFSVTLTAPAFA. Low complexity predominate over residues 29-44; the sequence is NTQNTPQTITTKKPQP. The interval 29 to 50 is disordered; sequence NTQNTPQTITTKKPQPAENTFS. Active-site residues include His-84, Asp-127, and Ser-128.

This sequence belongs to the lipid A palmitoyltransferase family. As to quaternary structure, homodimer.

It is found in the cell outer membrane. It carries out the reaction a lipid A + a 1,2-diacyl-sn-glycero-3-phosphocholine = a hepta-acyl lipid A + a 2-acyl-sn-glycero-3-phosphocholine. It catalyses the reaction a lipid IVA + a 1,2-diacyl-sn-glycero-3-phosphocholine = a lipid IVB + a 2-acyl-sn-glycero-3-phosphocholine. The enzyme catalyses a lipid IIA + a 1,2-diacyl-sn-glycero-3-phosphocholine = a lipid IIB + a 2-acyl-sn-glycero-3-phosphocholine. Its function is as follows. Transfers a fatty acid residue from the sn-1 position of a phospholipid to the N-linked hydroxyfatty acid chain on the proximal unit of lipid A or its precursors. In Proteus mirabilis (strain HI4320), this protein is Lipid A acyltransferase PagP.